The following is a 1226-amino-acid chain: Methionine synthase (1226 aa).

Residues 7 to 327 (KVQIEKQLSE…EHIRQMALVV (321 aa)) form the Hcy-binding domain. Positions 249, 312, and 313 each coordinate Zn(2+). Residues 358-619 (FINVGERTNV…VPEDLREAVE (262 aa)) enclose the Pterin-binding domain. The B12-binding N-terminal domain maps to 652–746 (SALEWRDWPV…FINASKEVGA (95 aa)). Residues E696, 758–762 (GDVHD), H761, S806, T810, and A862 each bind methylcob(III)alamin. The B12-binding domain occupies 748 to 883 (NGKILLATVK…SNELKPSFVE (136 aa)). The AdoMet activation domain maps to 899-1226 (KQPRTKPVTL…AEKWLGPNLN (328 aa)). S-adenosyl-L-methionine is bound by residues D949, R1137, and 1192 to 1193 (YF).

This sequence belongs to the vitamin-B12 dependent methionine synthase family. Requires methylcob(III)alamin as cofactor. The cofactor is Zn(2+).

The enzyme catalyses (6S)-5-methyl-5,6,7,8-tetrahydrofolate + L-homocysteine = (6S)-5,6,7,8-tetrahydrofolate + L-methionine. It functions in the pathway amino-acid biosynthesis; L-methionine biosynthesis via de novo pathway; L-methionine from L-homocysteine (MetH route): step 1/1. Catalyzes the transfer of a methyl group from methyl-cobalamin to homocysteine, yielding enzyme-bound cob(I)alamin and methionine. Subsequently, remethylates the cofactor using methyltetrahydrofolate. This chain is Methionine synthase (metH), found in Aliivibrio fischeri (Vibrio fischeri).